Consider the following 307-residue polypeptide: MIFTRLTRFVGHGTGLRLYATAEKSSLATLRKKTGYTFANCKKALEMHNNDLAKAEQWLQEQAQAMGWSKATKLEGRNTTQGLIGIMVKNNIGAMVEVNCETDFVARNQSFQKFVQAASTACVRYMDQIEGDANLTKVGLNSESLKQIKLEDGKSLADHLALMIGTVGENASLNRAICFKAPESINLTGYVHPAPTEEVPLDVPQFGKYGSILAFKHTSADSNGEVAKKVCQHVVGMKPAKIGDKTRDEPAKDKDDETCLIYQEYLADPSYTVAEVLEANNVEVVDFQRFECGEKIKMDDETVRAVN.

The transit peptide at 1–19 (MIFTRLTRFVGHGTGLRLY) directs the protein to the mitochondrion.

It belongs to the EF-Ts family.

The protein localises to the mitochondrion. Its function is as follows. Associates with the EF-Tu.GDP complex and induces the exchange of GDP to GTP. It remains bound to the aminoacyl-tRNA.EF-Tu.GTP complex up to the GTP hydrolysis stage on the ribosome. The chain is Elongation factor Ts, mitochondrial from Aedes aegypti (Yellowfever mosquito).